The following is an 889-amino-acid chain: Translation initiation factor IF-2 (889 aa).

Disordered regions lie at residues 47-85 (GHLK…AKSV) and 206-302 (AEAA…FTKP). 3 stretches are compositionally biased toward basic and acidic residues: residues 52–61 (QHGDESEAKP), 214–241 (AAKK…KEVV), and 252–263 (AEDKSDSADESG). The 170-residue stretch at 389–558 (TRAPVVTIMG…LLQSEVLELT (170 aa)) folds into the tr-type G domain. The tract at residues 398–405 (GHVDHGKT) is G1. 398-405 (GHVDHGKT) lines the GTP pocket. Residues 423 to 427 (GITQH) form a G2 region. A G3 region spans residues 444–447 (DTPG). Residues 444 to 448 (DTPGH) and 498 to 501 (NKMD) each bind GTP. The G4 stretch occupies residues 498 to 501 (NKMD). The segment at 534–536 (SAK) is G5.

This sequence belongs to the TRAFAC class translation factor GTPase superfamily. Classic translation factor GTPase family. IF-2 subfamily.

It is found in the cytoplasm. Its function is as follows. One of the essential components for the initiation of protein synthesis. Protects formylmethionyl-tRNA from spontaneous hydrolysis and promotes its binding to the 30S ribosomal subunits. Also involved in the hydrolysis of GTP during the formation of the 70S ribosomal complex. The protein is Translation initiation factor IF-2 of Colwellia psychrerythraea (strain 34H / ATCC BAA-681) (Vibrio psychroerythus).